The sequence spans 187 residues: Hypoxanthine/guanine phosphoribosyltransferase (187 aa).

This sequence belongs to the purine/pyrimidine phosphoribosyltransferase family. Archaeal HPRT subfamily. Homodimer.

It localises to the cytoplasm. The catalysed reaction is IMP + diphosphate = hypoxanthine + 5-phospho-alpha-D-ribose 1-diphosphate. It carries out the reaction GMP + diphosphate = guanine + 5-phospho-alpha-D-ribose 1-diphosphate. It participates in purine metabolism; IMP biosynthesis via salvage pathway; IMP from hypoxanthine: step 1/1. Its function is as follows. Catalyzes a salvage reaction resulting in the formation of IMP that is energically less costly than de novo synthesis. This Methanopyrus kandleri (strain AV19 / DSM 6324 / JCM 9639 / NBRC 100938) protein is Hypoxanthine/guanine phosphoribosyltransferase.